The sequence spans 229 residues: Putative N-acetylmannosamine-6-phosphate 2-epimerase (229 aa).

The protein belongs to the NanE family.

The catalysed reaction is an N-acyl-D-glucosamine 6-phosphate = an N-acyl-D-mannosamine 6-phosphate. The protein operates within amino-sugar metabolism; N-acetylneuraminate degradation; D-fructose 6-phosphate from N-acetylneuraminate: step 3/5. Its function is as follows. Converts N-acetylmannosamine-6-phosphate (ManNAc-6-P) to N-acetylglucosamine-6-phosphate (GlcNAc-6-P). The protein is Putative N-acetylmannosamine-6-phosphate 2-epimerase of Salmonella arizonae (strain ATCC BAA-731 / CDC346-86 / RSK2980).